The primary structure comprises 79 residues: Small ribosomal subunit protein bS18 (79 aa).

It belongs to the bacterial ribosomal protein bS18 family. Part of the 30S ribosomal subunit. Forms a tight heterodimer with protein bS6.

Functionally, binds as a heterodimer with protein bS6 to the central domain of the 16S rRNA, where it helps stabilize the platform of the 30S subunit. The protein is Small ribosomal subunit protein bS18 of Bacillus pumilus (strain SAFR-032).